The following is a 118-amino-acid chain: Large ribosomal subunit protein uL18 (118 aa).

It belongs to the universal ribosomal protein uL18 family. Part of the 50S ribosomal subunit; part of the 5S rRNA/L5/L18/L25 subcomplex. Contacts the 5S and 23S rRNAs.

In terms of biological role, this is one of the proteins that bind and probably mediate the attachment of the 5S RNA into the large ribosomal subunit, where it forms part of the central protuberance. The protein is Large ribosomal subunit protein uL18 of Ralstonia pickettii (strain 12J).